The following is a 276-amino-acid chain: MNFKNHHQKKRFGQHWLVNNLILEKIKEVAELDEKDFILEIGPGKGALTSKLLDSKISRLHAVELDKDLIDLLNNKFRNDKKFSLQQGDILSTNLDSINKKITKVIANIPYNITGPILDIFIGRLGIVSKNNYKKIIFLMQKDVVDRILSKESSKNAGAMSVRMQLISNIKRICDVPPSSFNPPPKVFSSLVVFEPLRPEKRLDIKLERYIDKLLQISFNSRRKMIRNTLNSILSEDEIKKLAELSEICFNSRPQDISINKWIKLAEGCIKITNKN.

Residues H15, L17, G42, E64, D89, and N108 each coordinate S-adenosyl-L-methionine.

This sequence belongs to the class I-like SAM-binding methyltransferase superfamily. rRNA adenine N(6)-methyltransferase family. RsmA subfamily.

The protein localises to the cytoplasm. It carries out the reaction adenosine(1518)/adenosine(1519) in 16S rRNA + 4 S-adenosyl-L-methionine = N(6)-dimethyladenosine(1518)/N(6)-dimethyladenosine(1519) in 16S rRNA + 4 S-adenosyl-L-homocysteine + 4 H(+). Functionally, specifically dimethylates two adjacent adenosines (A1518 and A1519) in the loop of a conserved hairpin near the 3'-end of 16S rRNA in the 30S particle. May play a critical role in biogenesis of 30S subunits. This chain is Ribosomal RNA small subunit methyltransferase A, found in Prochlorococcus marinus (strain MIT 9515).